We begin with the raw amino-acid sequence, 249 residues long: MIIAKQYRCIHSATCHCTKGHLSEEVLFLMVQHLNWNPNVIATLSCVCKWFDDLAKRLLWKEFCRARAPKMMSDLQSSGSHSVDGSWRALGKLLIYCSGSSKGGLFNDVQISGHFVHRTRFSRTSGRSFLPPQCRTDDILYVSDPCEHLDQGEDGDLGFFRGIFKSFSMSKVRKLLIKKGTPFHPTEVCPYCKAKLWSMLQAKMIPQSASCRLGAYEDSIEYYVCLNGHMLGVCTLLPLSDSEGASEFQ.

Residues 16–68 form the F-box domain; sequence HCTKGHLSEEVLFLMVQHLNWNPNVIATLSCVCKWFDDLAKRLLWKEFCRARA.

This is EID1-like F-box protein 2 (EDL2) from Arabidopsis thaliana (Mouse-ear cress).